We begin with the raw amino-acid sequence, 153 residues long: 6,7-dimethyl-8-ribityllumazine synthase (153 aa).

5-amino-6-(D-ribitylamino)uracil-binding positions include F21, 55 to 57, and 79 to 81; these read AFE and TVI. 84–85 is a (2S)-2-hydroxy-3-oxobutyl phosphate binding site; that stretch reads AT. H87 (proton donor) is an active-site residue. F112 lines the 5-amino-6-(D-ribitylamino)uracil pocket. R126 serves as a coordination point for (2S)-2-hydroxy-3-oxobutyl phosphate.

The protein belongs to the DMRL synthase family. In terms of assembly, forms an icosahedral capsid composed of 60 subunits, arranged as a dodecamer of pentamers.

The enzyme catalyses (2S)-2-hydroxy-3-oxobutyl phosphate + 5-amino-6-(D-ribitylamino)uracil = 6,7-dimethyl-8-(1-D-ribityl)lumazine + phosphate + 2 H2O + H(+). The protein operates within cofactor biosynthesis; riboflavin biosynthesis; riboflavin from 2-hydroxy-3-oxobutyl phosphate and 5-amino-6-(D-ribitylamino)uracil: step 1/2. Catalyzes the formation of 6,7-dimethyl-8-ribityllumazine by condensation of 5-amino-6-(D-ribitylamino)uracil with 3,4-dihydroxy-2-butanone 4-phosphate. This is the penultimate step in the biosynthesis of riboflavin. The protein is 6,7-dimethyl-8-ribityllumazine synthase of Bacillus cereus (strain ATCC 10987 / NRS 248).